A 473-amino-acid chain; its full sequence is Siroheme synthase (473 aa).

The interval 1–203 (MNYLPIFIDL…GNKEQAINVL (203 aa)) is precorrin-2 dehydrogenase /sirohydrochlorin ferrochelatase. Residues 22–23 (EV) and 43–44 (KE) each bind NAD(+). Phosphoserine is present on S128. The interval 215-473 (GEIILVGAGP…KNKFSTLTFI (259 aa)) is uroporphyrinogen-III C-methyltransferase. P224 serves as a coordination point for S-adenosyl-L-methionine. Residue D247 is the Proton acceptor of the active site. K269 functions as the Proton donor in the catalytic mechanism. S-adenosyl-L-methionine is bound by residues 300 to 302 (GGD), I305, M382, and G411.

It in the N-terminal section; belongs to the precorrin-2 dehydrogenase / sirohydrochlorin ferrochelatase family. The protein in the C-terminal section; belongs to the precorrin methyltransferase family.

It catalyses the reaction uroporphyrinogen III + 2 S-adenosyl-L-methionine = precorrin-2 + 2 S-adenosyl-L-homocysteine + H(+). It carries out the reaction precorrin-2 + NAD(+) = sirohydrochlorin + NADH + 2 H(+). The enzyme catalyses siroheme + 2 H(+) = sirohydrochlorin + Fe(2+). The protein operates within cofactor biosynthesis; adenosylcobalamin biosynthesis; precorrin-2 from uroporphyrinogen III: step 1/1. It participates in cofactor biosynthesis; adenosylcobalamin biosynthesis; sirohydrochlorin from precorrin-2: step 1/1. Its pathway is porphyrin-containing compound metabolism; siroheme biosynthesis; precorrin-2 from uroporphyrinogen III: step 1/1. It functions in the pathway porphyrin-containing compound metabolism; siroheme biosynthesis; siroheme from sirohydrochlorin: step 1/1. The protein operates within porphyrin-containing compound metabolism; siroheme biosynthesis; sirohydrochlorin from precorrin-2: step 1/1. In terms of biological role, multifunctional enzyme that catalyzes the SAM-dependent methylations of uroporphyrinogen III at position C-2 and C-7 to form precorrin-2 via precorrin-1. Then it catalyzes the NAD-dependent ring dehydrogenation of precorrin-2 to yield sirohydrochlorin. Finally, it catalyzes the ferrochelation of sirohydrochlorin to yield siroheme. The protein is Siroheme synthase of Buchnera aphidicola subsp. Acyrthosiphon pisum (strain APS) (Acyrthosiphon pisum symbiotic bacterium).